A 393-amino-acid polypeptide reads, in one-letter code: NAD(P)H-quinone oxidoreductase subunit H, chloroplastic (393 aa).

The protein belongs to the complex I 49 kDa subunit family. NDH is composed of at least 16 different subunits, 5 of which are encoded in the nucleus.

It localises to the plastid. The protein localises to the chloroplast thylakoid membrane. The enzyme catalyses a plastoquinone + NADH + (n+1) H(+)(in) = a plastoquinol + NAD(+) + n H(+)(out). It carries out the reaction a plastoquinone + NADPH + (n+1) H(+)(in) = a plastoquinol + NADP(+) + n H(+)(out). In terms of biological role, NDH shuttles electrons from NAD(P)H:plastoquinone, via FMN and iron-sulfur (Fe-S) centers, to quinones in the photosynthetic chain and possibly in a chloroplast respiratory chain. The immediate electron acceptor for the enzyme in this species is believed to be plastoquinone. Couples the redox reaction to proton translocation, and thus conserves the redox energy in a proton gradient. The sequence is that of NAD(P)H-quinone oxidoreductase subunit H, chloroplastic from Acorus calamus var. americanus (American sweet flag).